Consider the following 189-residue polypeptide: Interferon alpha-17 (189 aa).

An N-terminal signal peptide occupies residues 1–23 (MALSFSLLMAVLVLSYKSICSLG). Disulfide bonds link Cys-24–Cys-122 and Cys-52–Cys-162.

Belongs to the alpha/beta interferon family.

Its subcellular location is the secreted. Produced by macrophages, IFN-alpha have antiviral activities. Interferon stimulates the production of two enzymes: a protein kinase and an oligoadenylate synthetase. This Homo sapiens (Human) protein is Interferon alpha-17 (IFNA17).